Consider the following 629-residue polypeptide: MEVKTLDVANFLARIQKQESTFESLSKFSPTQLKELATCIRHRILEVVSSNGGHLSSTLGAVDLIIGMHLVFDANTNPFIFDVSHQAYAHKLLTGRWNDFSSLRQFGGLSGFCNPKESPSDYFIAGHSSTSISLAVGAAKALALKGSASMPVVMIGDGSMSAGLVYEALNELGDKKYPMVIILNDNKMSISKPIGAISNYLSQILTTSIYQKIRDTIKKVLTKMPDSATYLAKRFEESLKLITPGILFEELGLDYVGPIDGHNIELIIATLQRAKEMRKPVIIHAQTLKGKGYEIAEGRFEHWHGVGPFDVSTGSSLKSSAPQSPTAVFSESLESYLTDEKVVGVTAAMPSGTGLDKLIEKYPQRFWDVAICEAHAVTSMAAIAKEGFKPFVAIYSTFLQRAYDQIIHDVGILGLPVRFCIDRAGIVGEDGETHQGLFDIAYLRSIPHMVLFAPRDNASLQQAVAFAYRYNDSPCAFRYPRGSFTLEEGVFVSNEFVLGQAEMLKRGKKILLVGYGNGVGRAYKVYQALITEGYEPSLLDLRFVKPLDKHMLNEVFKTHTHICVFSDSYYMGGVASALLEFMAEENIKDVQLKSFEIKDRFVPHGNTALIEQSLGLDTPHLVSKIKEWI.

Thiamine diphosphate contacts are provided by residues His85 and 126 to 128 (GHS). Asp157 contributes to the Mg(2+) binding site. Thiamine diphosphate-binding positions include 158–159 (GS), Asn186, Tyr293, and Glu373. Asn186 provides a ligand contact to Mg(2+).

Belongs to the transketolase family. DXPS subfamily. In terms of assembly, homodimer. The cofactor is Mg(2+). Thiamine diphosphate is required as a cofactor.

The enzyme catalyses D-glyceraldehyde 3-phosphate + pyruvate + H(+) = 1-deoxy-D-xylulose 5-phosphate + CO2. It functions in the pathway metabolic intermediate biosynthesis; 1-deoxy-D-xylulose 5-phosphate biosynthesis; 1-deoxy-D-xylulose 5-phosphate from D-glyceraldehyde 3-phosphate and pyruvate: step 1/1. In terms of biological role, catalyzes the acyloin condensation reaction between C atoms 2 and 3 of pyruvate and glyceraldehyde 3-phosphate to yield 1-deoxy-D-xylulose-5-phosphate (DXP). The polypeptide is 1-deoxy-D-xylulose-5-phosphate synthase (Helicobacter hepaticus (strain ATCC 51449 / 3B1)).